A 92-amino-acid polypeptide reads, in one-letter code: Acylphosphatase (92 aa).

Residues 5-92 (QVQLFVRGRV…GDFFDFRITD (88 aa)) enclose the Acylphosphatase-like domain. Catalysis depends on residues arginine 20 and asparagine 38.

The protein belongs to the acylphosphatase family.

It carries out the reaction an acyl phosphate + H2O = a carboxylate + phosphate + H(+). The protein is Acylphosphatase (acyP) of Sorangium cellulosum (strain So ce56) (Polyangium cellulosum (strain So ce56)).